The primary structure comprises 658 residues: Carnitine O-palmitoyltransferase 2, mitochondrial (658 aa).

The N-terminal 25 residues, 1–25 (MMPRLLLRDWPRCPSLVLGAPSRPL), are a transit peptide targeting the mitochondrion. The Mitochondrial matrix portion of the chain corresponds to 26-178 (SAVSGPAEYL…GLLEPEVFHL (153 aa)). Lysine 69 carries the post-translational modification N6-succinyllysine. Lysine 79 carries the N6-acetyllysine modification. Lysine 85 bears the N6-succinyllysine mark. An intramembrane region (note=Mitochondrial inner membrane) is located at residues 179-208 (NPARSDTDAFKRLIRFVPSSLSWYGAYLVN). Topologically, residues 209-658 (AYPLDMSQYF…DALEGKAIKT (450 aa)) are mitochondrial matrix. At lysine 239 the chain carries N6-acetyllysine; alternate. An N6-succinyllysine; alternate modification is found at lysine 239. Residue lysine 305 is modified to N6-acetyllysine. Histidine 372 (proton acceptor) is an active-site residue. N6-acetyllysine; alternate is present on lysine 418. An N6-succinyllysine; alternate modification is found at lysine 418. An N6-succinyllysine mark is found at lysine 424 and lysine 439. 452-464 (GKEFLKKKKLSPD) lines the CoA pocket. Positions 486, 488, and 499 each coordinate (R)-carnitine. Lysine 510 and lysine 544 each carry N6-acetyllysine; alternate. 2 positions are modified to N6-succinyllysine; alternate: lysine 510 and lysine 544.

It belongs to the carnitine/choline acetyltransferase family.

The protein resides in the mitochondrion inner membrane. The catalysed reaction is (R)-carnitine + hexadecanoyl-CoA = O-hexadecanoyl-(R)-carnitine + CoA. It catalyses the reaction octanoyl-CoA + (R)-carnitine = O-octanoyl-(R)-carnitine + CoA. The enzyme catalyses decanoyl-CoA + (R)-carnitine = O-decanoyl-(R)-carnitine + CoA. It carries out the reaction dodecanoyl-CoA + (R)-carnitine = O-dodecanoyl-R-carnitine + CoA. The catalysed reaction is tetradecanoyl-CoA + (R)-carnitine = O-tetradecanoyl-(R)-carnitine + CoA. It catalyses the reaction (R)-carnitine + octadecanoyl-CoA = O-octadecanoyl-(R)-carnitine + CoA. The enzyme catalyses eicosanoyl-CoA + (R)-carnitine = O-eicosanoyl-(R)-carnitine + CoA. It carries out the reaction (9Z)-tetradecenoyl-CoA + (R)-carnitine = O-(9Z)-tetradecenoyl-(R)-carnitine + CoA. The catalysed reaction is (5Z)-tetradecenoyl-CoA + (R)-carnitine = O-(5Z)-tetradecenoyl-(R)-carnitine + CoA. It catalyses the reaction (R)-carnitine + (9Z)-octadecenoyl-CoA = O-(9Z)-octadecenoyl-(R)-carnitine + CoA. The enzyme catalyses 4,8-dimethylnonanoyl-CoA + (R)-carnitine = O-4,8-dimethylnonanoyl-(R)-carnitine + CoA. It functions in the pathway lipid metabolism; fatty acid beta-oxidation. Involved in the intramitochondrial synthesis of acylcarnitines from accumulated acyl-CoA metabolites. Reconverts acylcarnitines back into the respective acyl-CoA esters that can then undergo beta-oxidation, an essential step for the mitochondrial uptake of long-chain fatty acids and their subsequent beta-oxidation in the mitochondrion. Active with medium (C8-C12) and long-chain (C14-C18) acyl-CoA esters. The chain is Carnitine O-palmitoyltransferase 2, mitochondrial from Mus musculus (Mouse).